The chain runs to 710 residues: Cleavage and polyadenylation factor complex subunit C74.02c (710 aa).

The segment covering 1–30 (MDNWNSVRNVSSDRQTSKTSENPPHTSNEY) has biased composition (polar residues). Disordered stretches follow at residues 1-42 (MDNW…LSPD), 85-170 (ASSN…SDVN), and 361-510 (GPAM…SVSW). Low complexity predominate over residues 86–108 (SSNPSLISSGSSQTGSPSQSLSS). Polar residues predominate over residues 109-170 (NKEPSSPGIS…EVPSSKSDVN (62 aa)). Composition is skewed to low complexity over residues 361-383 (GPAM…SSNS) and 401-420 (LASS…PLTK). The span at 421–430 (QQTNPSTPLS) shows a compositional bias: polar residues. The segment covering 437-447 (KGREKEKDKDS) has biased composition (basic and acidic residues).

Component of the cleavage and polyadenylation factor (CPF) complex.

Its subcellular location is the cytoplasm. The protein resides in the nucleus. RNA-binding component of the cleavage and polyadenylation factor (CPF) complex, which plays a key role in polyadenylation-dependent pre-mRNA 3'-end formation. Involved in poly(A) site recognition. May be involved in coupling transcription termination and mRNA 3'-end formation. In Schizosaccharomyces pombe (strain 972 / ATCC 24843) (Fission yeast), this protein is Cleavage and polyadenylation factor complex subunit C74.02c.